Reading from the N-terminus, the 157-residue chain is MNAQKGFTLIELMIVIAIIGILAAIALPAYQDYISKSQTTRVVGELAAGKTAVDAALFEGKTPKLGKAANDTEEDIGLTTTGGTARSNLMSSVNIGGGAFATGAGTLEATLGNRANKDIAGAVITQSRDAEGVWTCTINGSAAPGWKSKFVPTGCKE.

Positions 1-6 (MNAQKG) are excised as a propeptide. Phe7 carries the N-methylphenylalanine modification. A disulfide bridge links Cys136 with Cys155.

This sequence belongs to the N-Me-Phe pilin family. The pili are polar flexible filaments of about 5.4 nanometers diameter and 2.5 micrometers average length; they consist of only a single polypeptide chain arranged in a helical configuration of five subunits per turn in the assembled pilus.

The protein resides in the fimbrium. In Moraxella bovis, this protein is Fimbrial protein Q (tfpQ).